A 37-amino-acid polypeptide reads, in one-letter code: MKTIELITIFAMITTLMVTVVAGDPIDPKVLESLVGK.

An N-terminal signal peptide occupies residues 1-23 (MKTIELITIFAMITTLMVTVVAG). Positions 24 to 25 (DP) are excised as a propeptide. Val-35 is subject to Valine amide.

Expressed by the venom gland.

It localises to the secreted. Toxin that induces mild paralysis, and reduces survival and reproduction when injected into aphids (A.pisum). May affect various processes in the aphid, including wound healing and hemolymph coagulation. It does not increase the sensitivity of the aphids to the chemical insecticides imidacloprid, methomyl and Spirotetramat. Has no insecticidal activity when injected into blowfly (L.caesar). Does not display any antibacterial or antifungal activity. The sequence is that of U12-myrmicitoxin-Mri1a from Manica rubida (European giant red ant).